Reading from the N-terminus, the 80-residue chain is Teretoxin Tsu6.5 (80 aa).

Positions 1-21 (MAINGRLLCLCLVLGLVFESL) are cleaved as a signal peptide. Positions 22 to 42 (GHPSVQEKRAAEDSKPSGERR) are excised as a propeptide.

The protein belongs to the teretoxin M (TM) superfamily. In terms of processing, contains 3 disulfide bonds. In terms of tissue distribution, expressed by the venom duct.

Its subcellular location is the secreted. The sequence is that of Teretoxin Tsu6.5 from Terebra subulata (Chocolate spotted auger).